The sequence spans 319 residues: Ribonucleoside-diphosphate reductase small chain (319 aa).

The segment at 313 to 319 (FSLDVDF) is interaction with R1.

Belongs to the ribonucleoside diphosphate reductase small chain family. As to quaternary structure, interacts with RNR1/OPG080 subunit. Can interact with host RNR1 supunit. Fe cation serves as cofactor.

The catalysed reaction is a 2'-deoxyribonucleoside 5'-diphosphate + [thioredoxin]-disulfide + H2O = a ribonucleoside 5'-diphosphate + [thioredoxin]-dithiol. Ribonucleoside-diphosphate reductase holoenzyme provides the precursors necessary for viral DNA synthesis. Allows virus growth in non-dividing cells. Catalyzes the biosynthesis of deoxyribonucleotides from the corresponding ribonucleotides. This Cynomys gunnisoni (Gunnison's prairie dog) protein is Ribonucleoside-diphosphate reductase small chain (OPG048).